The primary structure comprises 701 residues: Elongation factor G (701 aa).

Positions Thr-11 to Leu-287 constitute a tr-type G domain. GTP is bound by residues Ala-20–Thr-27, Asp-84–His-88, and Asn-138–Asp-141.

Belongs to the TRAFAC class translation factor GTPase superfamily. Classic translation factor GTPase family. EF-G/EF-2 subfamily.

The protein resides in the cytoplasm. In terms of biological role, catalyzes the GTP-dependent ribosomal translocation step during translation elongation. During this step, the ribosome changes from the pre-translocational (PRE) to the post-translocational (POST) state as the newly formed A-site-bound peptidyl-tRNA and P-site-bound deacylated tRNA move to the P and E sites, respectively. Catalyzes the coordinated movement of the two tRNA molecules, the mRNA and conformational changes in the ribosome. This chain is Elongation factor G, found in Mycobacterium ulcerans (strain Agy99).